Reading from the N-terminus, the 114-residue chain is UPF0145 protein Acry_1752 (114 aa).

The protein belongs to the UPF0145 family.

This is UPF0145 protein Acry_1752 from Acidiphilium cryptum (strain JF-5).